The following is a 299-amino-acid chain: UPF0603 protein OsI_019212, chloroplastic (299 aa).

2 stretches are compositionally biased toward low complexity: residues 1 to 14 and 22 to 36; these read METL…LSPL and ASPA…SSPA. Residues 1 to 41 constitute a chloroplast transit peptide; it reads METLLSPSTLLSPLRGSKKKPASPAASASSSSSSPARSVVS. Disordered regions lie at residues 1–60 and 244–265; these read METL…WRGD and PDPG…TKEE. Residues 42–98 constitute a thylakoid transit peptide; sequence CALRRQQPPPQAVAAWRGDGGRGGGVGSWATFLQHGLAAAALSLAISMAPAPAPAVA. The segment covering 252–265 has biased composition (basic and acidic residues); that stretch reads KDNKRESNFKTKEE. Residues 276 to 296 form a helical membrane-spanning segment; it reads VVGGLLVIAFVVPMAQYYAYI.

The protein belongs to the UPF0603 family.

It localises to the plastid. Its subcellular location is the chloroplast thylakoid membrane. The protein is UPF0603 protein OsI_019212, chloroplastic of Oryza sativa subsp. indica (Rice).